The chain runs to 122 residues: Small ribosomal subunit protein uS13 (122 aa).

Positions 99–122 (RGQRTHTNARTRKGPAKAIAGKKK) are disordered.

The protein belongs to the universal ribosomal protein uS13 family. In terms of assembly, part of the 30S ribosomal subunit. Forms a loose heterodimer with protein S19. Forms two bridges to the 50S subunit in the 70S ribosome.

Its function is as follows. Located at the top of the head of the 30S subunit, it contacts several helices of the 16S rRNA. In the 70S ribosome it contacts the 23S rRNA (bridge B1a) and protein L5 of the 50S subunit (bridge B1b), connecting the 2 subunits; these bridges are implicated in subunit movement. Contacts the tRNAs in the A and P-sites. This is Small ribosomal subunit protein uS13 from Bradyrhizobium sp. (strain ORS 278).